We begin with the raw amino-acid sequence, 263 residues long: Imidazole glycerol phosphate synthase subunit HisF (263 aa).

Residues D11 and D131 contribute to the active site.

It belongs to the HisA/HisF family. Heterodimer of HisH and HisF.

It localises to the cytoplasm. It carries out the reaction 5-[(5-phospho-1-deoxy-D-ribulos-1-ylimino)methylamino]-1-(5-phospho-beta-D-ribosyl)imidazole-4-carboxamide + L-glutamine = D-erythro-1-(imidazol-4-yl)glycerol 3-phosphate + 5-amino-1-(5-phospho-beta-D-ribosyl)imidazole-4-carboxamide + L-glutamate + H(+). It functions in the pathway amino-acid biosynthesis; L-histidine biosynthesis; L-histidine from 5-phospho-alpha-D-ribose 1-diphosphate: step 5/9. Functionally, IGPS catalyzes the conversion of PRFAR and glutamine to IGP, AICAR and glutamate. The HisF subunit catalyzes the cyclization activity that produces IGP and AICAR from PRFAR using the ammonia provided by the HisH subunit. The protein is Imidazole glycerol phosphate synthase subunit HisF of Deinococcus geothermalis (strain DSM 11300 / CIP 105573 / AG-3a).